Here is a 622-residue protein sequence, read N- to C-terminus: Procollagen galactosyltransferase 1 (622 aa).

A signal peptide spans 1 to 29 (MAAAPRAGRRRGQPLLALLLLLLAPLPPG). Residues Asn-96, Asn-184, and Asn-381 are each glycosylated (N-linked (GlcNAc...) asparagine). Residues 588-606 (RAKSQKMREQQALSREAKN) show a composition bias toward basic and acidic residues. Residues 588–622 (RAKSQKMREQQALSREAKNSDVLQSPLDSAARDEL) are disordered. Residues 619-622 (RDEL) carry the Endoplasmic reticulum retention motif motif.

The protein belongs to the glycosyltransferase 25 family. N-glycosylated. As to expression, ubiquitous with higher levels in placenta, heart, lung and spleen.

The protein localises to the endoplasmic reticulum lumen. The enzyme catalyses (5R)-5-hydroxy-L-lysyl-[collagen] + UDP-alpha-D-galactose = (5R)-5-O-(beta-D-galactosyl)-5-hydroxy-L-lysyl-[collagen] + UDP + H(+). Its function is as follows. Beta-galactosyltransferase that transfers beta-galactose to hydroxylysine residues of type I collagen. By acting on collagen glycosylation, facilitates the formation of collagen triple helix. Also involved in the biosynthesis of collagen type IV. The polypeptide is Procollagen galactosyltransferase 1 (COLGALT1) (Homo sapiens (Human)).